Reading from the N-terminus, the 151-residue chain is Transcriptional repressor NrdR (151 aa).

A zinc finger spans residues 3–34 (CPYCGYEETRVLDSRVDSSGMTVRRRRECVKC). One can recognise an ATP-cone domain in the interval 49–139 (VFVVKKDGKR…VYKDFREIDQ (91 aa)).

Belongs to the NrdR family. Zn(2+) serves as cofactor.

Functionally, negatively regulates transcription of bacterial ribonucleotide reductase nrd genes and operons by binding to NrdR-boxes. The polypeptide is Transcriptional repressor NrdR (Thermosipho melanesiensis (strain DSM 12029 / CIP 104789 / BI429)).